A 356-amino-acid chain; its full sequence is Phospho-N-acetylmuramoyl-pentapeptide-transferase (356 aa).

A run of 10 helical transmembrane segments spans residues 3–23, 51–71, 80–100, 114–134, 152–172, 185–205, 227–247, 254–274, 279–299, and 333–353; these read QILF…PLLI, TMGG…AKVI, GLLV…DDYI, AKMA…LQFP, FGWS…ILAM, LATG…LWQF, PLDL…FLWW, IFMG…LAIL, FLLA…VIQV, and FWII…AGWA.

The protein belongs to the glycosyltransferase 4 family. MraY subfamily. Mg(2+) is required as a cofactor.

The protein localises to the cell membrane. It catalyses the reaction UDP-N-acetyl-alpha-D-muramoyl-L-alanyl-gamma-D-glutamyl-meso-2,6-diaminopimeloyl-D-alanyl-D-alanine + di-trans,octa-cis-undecaprenyl phosphate = di-trans,octa-cis-undecaprenyl diphospho-N-acetyl-alpha-D-muramoyl-L-alanyl-D-glutamyl-meso-2,6-diaminopimeloyl-D-alanyl-D-alanine + UMP. Its pathway is cell wall biogenesis; peptidoglycan biosynthesis. In terms of biological role, catalyzes the initial step of the lipid cycle reactions in the biosynthesis of the cell wall peptidoglycan: transfers peptidoglycan precursor phospho-MurNAc-pentapeptide from UDP-MurNAc-pentapeptide onto the lipid carrier undecaprenyl phosphate, yielding undecaprenyl-pyrophosphoryl-MurNAc-pentapeptide, known as lipid I. The sequence is that of Phospho-N-acetylmuramoyl-pentapeptide-transferase from Streptomyces griseus subsp. griseus (strain JCM 4626 / CBS 651.72 / NBRC 13350 / KCC S-0626 / ISP 5235).